Reading from the N-terminus, the 262-residue chain is Type III pantothenate kinase (262 aa).

Position 6–13 (6–13 (DVGNTNTV)) interacts with ATP. Substrate-binding positions include Tyr-101 and 108 to 111 (GADR). Asp-110 serves as the catalytic Proton acceptor. A K(+)-binding site is contributed by Asp-130. Thr-133 contributes to the ATP binding site. Thr-186 contacts substrate.

Belongs to the type III pantothenate kinase family. Homodimer. The cofactor is NH4(+). Requires K(+) as cofactor.

Its subcellular location is the cytoplasm. The catalysed reaction is (R)-pantothenate + ATP = (R)-4'-phosphopantothenate + ADP + H(+). It participates in cofactor biosynthesis; coenzyme A biosynthesis; CoA from (R)-pantothenate: step 1/5. Catalyzes the phosphorylation of pantothenate (Pan), the first step in CoA biosynthesis. In Desulforapulum autotrophicum (strain ATCC 43914 / DSM 3382 / VKM B-1955 / HRM2) (Desulfobacterium autotrophicum), this protein is Type III pantothenate kinase.